Consider the following 263-residue polypeptide: MPEGPEIRRAADNLEAAIKGKPLTDVWFAFAQLKPYESQLTGQLVTRIETRGKALLTHFSNGLTLYSHNQLYGVWRVIDTGEIPQTTRILRVRLQTADKTILLYSASDIEMLTAEQLTTHPFLQRVGPDVLDARLTPEEVKARLLSPRFRNRQFSGLLLDQSFLAGLGNYLRVEILWQVGLTGQHKAKDLNEAQLNALSHALLDIPRLSYTTRGQADENKHHGALFRFKLFHRDGEACERCGGIIEKTTLSSRPFYWCPHCQK.

Pro-2 serves as the catalytic Schiff-base intermediate with DNA. Glu-3 serves as the catalytic Proton donor. The active-site Proton donor; for beta-elimination activity is Lys-53. The DNA site is built by Gln-70, Arg-125, and Asn-169. An FPG-type zinc finger spans residues 229-263; it reads KLFHRDGEACERCGGIIEKTTLSSRPFYWCPHCQK. Arg-253 serves as the catalytic Proton donor; for delta-elimination activity.

Belongs to the FPG family. The cofactor is Zn(2+).

The catalysed reaction is 2'-deoxyribonucleotide-(2'-deoxyribose 5'-phosphate)-2'-deoxyribonucleotide-DNA = a 3'-end 2'-deoxyribonucleotide-(2,3-dehydro-2,3-deoxyribose 5'-phosphate)-DNA + a 5'-end 5'-phospho-2'-deoxyribonucleoside-DNA + H(+). Involved in base excision repair of DNA damaged by oxidation or by mutagenic agents. Acts as a DNA glycosylase that recognizes and removes damaged bases. Has a preference for oxidized pyrimidines, such as thymine glycol, 5,6-dihydrouracil and 5,6-dihydrothymine. Has AP (apurinic/apyrimidinic) lyase activity and introduces nicks in the DNA strand. Cleaves the DNA backbone by beta-delta elimination to generate a single-strand break at the site of the removed base with both 3'- and 5'-phosphates. This chain is Endonuclease 8, found in Salmonella typhimurium (strain SL1344).